A 1015-amino-acid chain; its full sequence is Putative ankyrin repeat protein R96 (1015 aa).

The span at 1–14 (MSTVKKSSKKKSSK) shows a compositional bias: basic residues. The interval 1–37 (MSTVKKSSKKKSSKKSSSGNESSKKSSPKIVPKHTAK) is disordered. ANK repeat units lie at residues 136–165 (NGHKVLKILVYENDIPSIIALVENGANIDF), 168–201 (APSNILHICASRNYPVLLKYALSRNEIDINAVNI), 202–231 (DGRSPLYLACLYLNKECIKILLDNGADVEV), 340–370 (LGHNAINTSIMFCNNSLIKYFVDKTDLDFQA), 374–403 (NITNPIQMLVNHGYIDYVETILNRNPKIVS), 456–485 (SGYRPIEVAIRYCSIDVIKELLKYNTTIFA), 498–527 (NNNDIISFATQLGRFDVVTYLIQENVQFQL), and 535–564 (TVPTALLIAIVYHRKNFIQFFLELPQITDC).

The polypeptide is Putative ankyrin repeat protein R96 (Acanthamoeba polyphaga mimivirus (APMV)).